The primary structure comprises 357 residues: Arginine kinase (357 aa).

An N-acetylalanine modification is found at Ala-2. The region spanning 9–91 is the Phosphagen kinase N-terminal domain; it reads KLDEGFKKLE…FDPIIEDYHK (83 aa). 64–68 is a binding site for L-arginine; the sequence is GVGVY. One can recognise a Phosphagen kinase C-terminal domain in the interval 119–356; that stretch reads FVISTRVRCG…LELIKIEKEM (238 aa). Residues 122–126 and His-185 each bind ATP; that span reads STRVR. Residue Glu-225 participates in L-arginine binding. ATP is bound at residue Arg-229. Residue Cys-271 participates in L-arginine binding. Residues 280-284 and 309-314 each bind ATP; these read RASVH and RGTRGE. Glu-314 provides a ligand contact to L-arginine.

This sequence belongs to the ATP:guanido phosphotransferase family.

The enzyme catalyses L-arginine + ATP = N(omega)-phospho-L-arginine + ADP + H(+). The sequence is that of Arginine kinase from Eriocheir sinensis (Chinese mitten crab).